The primary structure comprises 1059 residues: MTPKPNTTSPTNNLPLLSKDSPDIESLLILNPKVQDKANAVPSAVTKKNKHNWKRNEEKGCGSTCGESKLKNDFRDIKHTTLSERGALKEAMRCLKCADAPCQKSCPTQLDVKSFITSISNKNYYGAARQILSDNPLGLTCGMICPTSDLCVGSCNLQASEEGAINIGGLQQYACDVFKQMNVRQIVSKEVRENRNASHKEQVALIGCGPASISCASFLARLGYTDITIYEKRAYIGGLSSAEIPQFRLPYDVVDFEIQLARDIGVQIETNRPLGKDGLTLAKLKEQGAAAVFIGIGNPEPKIDPLFEGLTIENGFYTSKNYLPAVAAASKPGMCGCKRTPLPTMRGRVVVLGAGDTAMDCATSALRCGASRVTIAFRKGFTGIRAVPEEMEAAKEEKCEFLPFSAPRKINVKDGRIVSIEFNKTEQDDNGKWYEDEEQIVILKCDYVISAFGSTLKEDAVLSALQPCQLNKWGGIEVDSTTQQTSEKWVFAGGDVAGVAETTVESVNDGKIAAWNMHRYIQSLHGNQVSETPELPQFFTPIDEVDISVDMCGVKFENPFGLASAPPTTSGPMCRRAFEQGWGFILTKTYGLDKDLVTNVSPRIVRGSTSGPLYGPNQGSFMNIELISEKSCEYWLQCIRELKRDHPTKIVIASIMCVYNKADWIELATKSEEAGADILELNLSCPHGMGEKGMGLACGQSPEIVKEICRWVRACVKIPFFPKMTPNITDVREIARAARDGGASGVTATNTVSSLMHMKADGNAWPAIGSTKRTTYGGMSGSAIRPIAMKAVSSIANELDGFPIMATGGIESAETGLGFLMAGASVLQVCSAVQNQDFTVVDDYCTGLKALLYLSGAESLKNWDGQSPPIEKHQKGKPILLQGQKKMPFFGKYRDEREKLEAIKLSESNLLDTENYHFASRPDTQVSRVPTVEDVIGKALPRIGPYVTLDNQEQKVAIIDDDMCINCGKCYMTCNDSGYQAITFDPVTHQPHVTEDDCTGCTLCYSVCPIPECIEMVPRTGPWKAPKRGVKPSVEPGTPKVVKVDQRGRVILDTTGGMQ.

Positions 84 to 118 (ERGALKEAMRCLKCADAPCQKSCPTQLDVKSFITS) constitute a 4Fe-4S ferredoxin-type 1 domain. Positions 94, 97, 102, 106, 145, 151, 155, and 171 each coordinate [4Fe-4S] cluster. Residues 207 to 211 (GCGPA), 231 to 239 (EKRAYIGGL), R248, and L274 contribute to the FAD site. NADP(+) contacts are provided by residues 354 to 357 (AGDT), 378 to 379 (RK), R385, 451 to 453 (AFG), and 495 to 501 (DVAGVAE). 494–503 (GDVAGVAETT) lines the FAD pocket. FMN is bound by residues S564 and 588-589 (KT). Substrate contacts are provided by residues N623 and 682 to 684 (NLS). The Proton acceptor role is filled by C685. Position 723 (K723) interacts with FMN. 750 to 751 (NT) contributes to the substrate binding site. FMN is bound by residues G781, 807-809 (TGG), and 830-831 (CS). 4Fe-4S ferredoxin-type domains follow at residues 955 to 987 (KVAIIDDDMCINCGKCYMTCNDSGYQAITFDPV) and 989 to 1019 (HQPHVTEDDCTGCTLCYSVCPIPECIEMVPR). 8 residues coordinate [4Fe-4S] cluster: C964, C967, C970, C974, C998, C1001, C1004, and C1008.

Belongs to the dihydropyrimidine dehydrogenase family. [4Fe-4S] cluster serves as cofactor. It depends on FAD as a cofactor. Requires FMN as cofactor.

It carries out the reaction 5,6-dihydrouracil + NADP(+) = uracil + NADPH + H(+). The protein operates within amino-acid biosynthesis; beta-alanine biosynthesis. Its function is as follows. Involved in pyrimidine base degradation. Catalyzes the reduction of uracil and thymine. Involved in the degradation of the chemotherapeutic drug 5-fluorouracil. The chain is Dihydropyrimidine dehydrogenase [NADP(+)] (dpyd-1) from Caenorhabditis elegans.